Reading from the N-terminus, the 115-residue chain is NAD(P)H-quinone oxidoreductase subunit M (115 aa).

Belongs to the complex I NdhM subunit family. In terms of assembly, NDH-1 can be composed of about 15 different subunits; different subcomplexes with different compositions have been identified which probably have different functions.

The protein resides in the cellular thylakoid membrane. It carries out the reaction a plastoquinone + NADH + (n+1) H(+)(in) = a plastoquinol + NAD(+) + n H(+)(out). It catalyses the reaction a plastoquinone + NADPH + (n+1) H(+)(in) = a plastoquinol + NADP(+) + n H(+)(out). In terms of biological role, NDH-1 shuttles electrons from an unknown electron donor, via FMN and iron-sulfur (Fe-S) centers, to quinones in the respiratory and/or the photosynthetic chain. The immediate electron acceptor for the enzyme in this species is believed to be plastoquinone. Couples the redox reaction to proton translocation, and thus conserves the redox energy in a proton gradient. Cyanobacterial NDH-1 also plays a role in inorganic carbon-concentration. This is NAD(P)H-quinone oxidoreductase subunit M from Prochlorococcus marinus (strain MIT 9515).